A 115-amino-acid polypeptide reads, in one-letter code: Large ribosomal subunit protein bL20c (115 aa).

It belongs to the bacterial ribosomal protein bL20 family.

It localises to the plastid. The protein resides in the organellar chromatophore. In terms of biological role, binds directly to 23S ribosomal RNA and is necessary for the in vitro assembly process of the 50S ribosomal subunit. It is not involved in the protein synthesizing functions of that subunit. This Paulinella chromatophora protein is Large ribosomal subunit protein bL20c.